The primary structure comprises 307 residues: tRNA dimethylallyltransferase (307 aa).

10 to 17 (GPTASGKS) serves as a coordination point for ATP. 12-17 (TASGKS) contributes to the substrate binding site. Interaction with substrate tRNA regions lie at residues 35–38 (DSMQ) and 159–163 (QRLCR).

It belongs to the IPP transferase family. As to quaternary structure, monomer. Requires Mg(2+) as cofactor.

The enzyme catalyses adenosine(37) in tRNA + dimethylallyl diphosphate = N(6)-dimethylallyladenosine(37) in tRNA + diphosphate. Functionally, catalyzes the transfer of a dimethylallyl group onto the adenine at position 37 in tRNAs that read codons beginning with uridine, leading to the formation of N6-(dimethylallyl)adenosine (i(6)A). This chain is tRNA dimethylallyltransferase, found in Phenylobacterium zucineum (strain HLK1).